Here is a 456-residue protein sequence, read N- to C-terminus: MSAAASPRSLTLIGAGLAGCLLAILLSRRGWQITLYERRGDPRIKGYESGRSINLALAERGRHALRQACAEDAVMAKAVMMRGRMIHPVSGEPQLQRYGRDDSEVIWSIHRAALNVTLLDLAEQAGARVHFYRRLHTVDFDAGYARFIDDRDDQPHEIHFQALVGSDGAGSALRAAMQRKAPVGEHIAFLDHSYKELEIPPRADGGFRIERNALHIWPRGRYMCIALPNDGGTFTVTLFLPNEGMPSFATTRSGDEALALFARDFPDALPLIPQLKEHWEEHPPGLLGTLTRERWHLDGRAVLLGDAAHAMVPFHGQGMNCAFEDCVALAEQLDAHSDLSEAFAAFEAARRDDAAAIQQMALENYLEMRDRVGDAQFLLQRALEQQLQARWPTRFVPHYTMVTFLRTRYAIALARSEIQREILLEATHGHTDLSRIDWVALETVVHARLEPLEGAH.

This sequence belongs to the aromatic-ring hydroxylase family. KMO subfamily. The cofactor is FAD.

The catalysed reaction is L-kynurenine + NADPH + O2 + H(+) = 3-hydroxy-L-kynurenine + NADP(+) + H2O. Its pathway is cofactor biosynthesis; NAD(+) biosynthesis; quinolinate from L-kynurenine: step 1/3. Functionally, catalyzes the hydroxylation of L-kynurenine (L-Kyn) to form 3-hydroxy-L-kynurenine (L-3OHKyn). Required for synthesis of quinolinic acid. The polypeptide is Kynurenine 3-monooxygenase (Xanthomonas campestris pv. campestris (strain B100)).